Reading from the N-terminus, the 105-residue chain is Cell division topological specificity factor (105 aa).

It belongs to the MinE family.

In terms of biological role, prevents the cell division inhibition by proteins MinC and MinD at internal division sites while permitting inhibition at polar sites. This ensures cell division at the proper site by restricting the formation of a division septum at the midpoint of the long axis of the cell. This chain is Cell division topological specificity factor, found in Prochlorococcus marinus (strain MIT 9515).